Consider the following 118-residue polypeptide: Non-specific lipid-transfer protein 5 (118 aa).

The N-terminal stretch at 1–25 (MEGLLKLSTLVIVCMLVTAPMASEA) is a signal peptide. Cystine bridges form between cysteine 29/cysteine 76, cysteine 39/cysteine 53, cysteine 54/cysteine 100, and cysteine 74/cysteine 114.

Belongs to the plant LTP family.

Its function is as follows. Plant non-specific lipid-transfer proteins transfer phospholipids as well as galactolipids across membranes. May play a role in wax or cutin deposition in the cell walls of expanding epidermal cells and certain secretory tissues. The sequence is that of Non-specific lipid-transfer protein 5 (LTP5) from Arabidopsis thaliana (Mouse-ear cress).